The sequence spans 173 residues: Crossover junction endodeoxyribonuclease RuvC (173 aa).

Active-site residues include aspartate 11, glutamate 71, and aspartate 143. 3 residues coordinate Mg(2+): aspartate 11, glutamate 71, and aspartate 143.

The protein belongs to the RuvC family. In terms of assembly, homodimer which binds Holliday junction (HJ) DNA. The HJ becomes 2-fold symmetrical on binding to RuvC with unstacked arms; it has a different conformation from HJ DNA in complex with RuvA. In the full resolvosome a probable DNA-RuvA(4)-RuvB(12)-RuvC(2) complex forms which resolves the HJ. The cofactor is Mg(2+).

It localises to the cytoplasm. The catalysed reaction is Endonucleolytic cleavage at a junction such as a reciprocal single-stranded crossover between two homologous DNA duplexes (Holliday junction).. Functionally, the RuvA-RuvB-RuvC complex processes Holliday junction (HJ) DNA during genetic recombination and DNA repair. Endonuclease that resolves HJ intermediates. Cleaves cruciform DNA by making single-stranded nicks across the HJ at symmetrical positions within the homologous arms, yielding a 5'-phosphate and a 3'-hydroxyl group; requires a central core of homology in the junction. The consensus cleavage sequence is 5'-(A/T)TT(C/G)-3'. Cleavage occurs on the 3'-side of the TT dinucleotide at the point of strand exchange. HJ branch migration catalyzed by RuvA-RuvB allows RuvC to scan DNA until it finds its consensus sequence, where it cleaves and resolves the cruciform DNA. The polypeptide is Crossover junction endodeoxyribonuclease RuvC (Brucella suis biovar 1 (strain 1330)).